A 1496-amino-acid polypeptide reads, in one-letter code: Carbamoyl-phosphate synthase [ammonia], mitochondrial (1496 aa).

A mitochondrion-targeting transit peptide spans 1–33 (MTRILSVFKTAKTGVLNAAAHRYRGFSKAGVRL). The anthranilate phosphoribosyltransferase homolog stretch occupies residues 34-214 (MSVKAQTANL…TKVFGKGNPV (181 aa)). The 187-residue stretch at 215–401 (RIVAVDCGVK…MSLIKKGKGT (187 aa)) folds into the Glutamine amidotransferase type-1 domain. The active-site For GATase activity is the cysteine 290. ATP-grasp domains lie at 548 to 740 (SDKL…KIAL) and 1090 to 1281 (SAVL…KVMI). In terms of domain architecture, MGS-like spans 1352–1496 (FKLPQKGILI…YRQFGGAKPS (145 aa)). Residues threonine 1388, threonine 1391, tryptophan 1407, asparagine 1433, asparagine 1436, and asparagine 1445 each coordinate N-acetyl-L-glutamate.

Its subcellular location is the mitochondrion. It carries out the reaction hydrogencarbonate + NH4(+) + 2 ATP = carbamoyl phosphate + 2 ADP + phosphate + 2 H(+). Its activity is regulated as follows. Requires N-acetyl-L-glutamate (NAG) as an allosteric activator. Its function is as follows. Involved in the urea cycle of ureotelic animals where the enzyme plays an important role in removing excess ammonia from the cell. The polypeptide is Carbamoyl-phosphate synthase [ammonia], mitochondrial (Aquarana catesbeiana (American bullfrog)).